We begin with the raw amino-acid sequence, 300 residues long: MRCLALDIGGTKIAAAIVKNGEIEQRQQIHTPRENVVEGMHQALGKLLADYEGQFDYVAVASTGIINNGILSALNPKNLGGLAEFPLKASIAKHTDKPIGLLNDAQAATYAEYQLQNSEQVSNFVFITVSTGVGGGIVLNQILQTGSRGIAGHIGHTLADPNGAICGCGRRGCVEAIASGRAIEAVSSQWEDPCDPKEVFERFRKNDEKATALVERSAKAIANLIADLVISLDIQKIAIGGSVGLAEGYLSLVEKYLQDFPSIYCCEIETAKFGQDAGLIGAAYWVKDVLLDKPEGTIYG.

Residues 5–12 (ALDIGGTK) and 132–139 (GVGGGIVL) contribute to the ATP site. Zn(2+) contacts are provided by H156, C166, C168, and C173.

Belongs to the ROK (NagC/XylR) family. NanK subfamily. Homodimer.

The catalysed reaction is an N-acyl-D-mannosamine + ATP = an N-acyl-D-mannosamine 6-phosphate + ADP + H(+). Its pathway is amino-sugar metabolism; N-acetylneuraminate degradation; D-fructose 6-phosphate from N-acetylneuraminate: step 2/5. Catalyzes the phosphorylation of N-acetylmannosamine (ManNAc) to ManNAc-6-P. The sequence is that of N-acetylmannosamine kinase from Haemophilus influenzae (strain PittEE).